We begin with the raw amino-acid sequence, 346 residues long: Galactitol 1-phosphate 5-dehydrogenase (346 aa).

7 residues coordinate Zn(2+): Cys-38, His-59, Cys-89, Cys-92, Cys-95, Cys-103, and Glu-144.

This sequence belongs to the zinc-containing alcohol dehydrogenase family. The cofactor is Zn(2+).

It catalyses the reaction galactitol 1-phosphate + NAD(+) = keto-D-tagatose 6-phosphate + NADH + H(+). Its function is as follows. Converts galactitol 1-phosphate to tagatose 6-phosphate. In Escherichia coli O157:H7, this protein is Galactitol 1-phosphate 5-dehydrogenase (gatD).